The following is a 259-amino-acid chain: Enkurin (259 aa).

2 disordered regions span residues 1–26 and 76–98; these read MVAMDPTGPSESIYNLIPSDWKEPPQ and PPKKKFEWNERRKPPVPLRTDHP. Positions 76–88 are enriched in basic and acidic residues; that stretch reads PPKKKFEWNERRK. The SH3-binding signature appears at 86–92; the sequence is RRKPPVP. The 93-residue stretch at 163-255 folds into the Enkurin domain; the sequence is KRNEEVKKAQ…VLEKHKVIYI (93 aa). The interval 163 to 258 is interaction with TRPC proteins; the sequence is KRNEEVKKAQ…KHKVIYIANK (96 aa). The region spanning 179–190 is the IQ domain; it reads IQENLRKAAMKR.

In terms of assembly, microtubule inner protein component of sperm flagellar doublet microtubules. Binds calmodulin via its IQ domain. Interacts with TRPC1, TRPC2, TRPC5, but not TRPC3. Interacts with CFAP45. Expressed in trachea multiciliated cells.

It is found in the cytoplasm. It localises to the cytoskeleton. The protein localises to the flagellum axoneme. Its subcellular location is the cilium axoneme. Adapter that functions to localize a calcium-sensitive signal transduction machinery in sperm to a calcium-permeable ion channel. Microtubule inner protein (MIP) part of the dynein-decorated doublet microtubules (DMTs) in cilia axoneme, which is required for motile cilia beating. The polypeptide is Enkurin (ENKUR) (Bos taurus (Bovine)).